The following is a 962-amino-acid chain: Putative RNA Helicase B962L (962 aa).

The 187-residue stretch at 43 to 229 (IPTSLADRVL…FGIGKENIIL (187 aa)) folds into the Helicase ATP-binding domain. Residue 56 to 63 (SRTGSGKS) participates in ATP binding. The DEAH box signature appears at 167–170 (DEAH). In terms of domain architecture, Helicase C-terminal spans 253-459 (ACETALTIHK…TIKKNKEGVF (207 aa)). The helical transmembrane segment at 521-541 (GYFWQAAISDIATILAVVSVA) threads the bilayer.

It belongs to the DEAD box helicase family. DEAH subfamily.

The protein localises to the host membrane. It is found in the virion. The enzyme catalyses ATP + H2O = ADP + phosphate + H(+). This African swine fever virus (isolate Tick/South Africa/Pretoriuskop Pr4/1996) (ASFV) protein is Putative RNA Helicase B962L.